A 370-amino-acid chain; its full sequence is 4-hydroxy-3-methylbut-2-en-1-yl diphosphate synthase (flavodoxin) (370 aa).

[4Fe-4S] cluster-binding residues include Cys-270, Cys-273, Cys-305, and Glu-312.

This sequence belongs to the IspG family. The cofactor is [4Fe-4S] cluster.

The catalysed reaction is (2E)-4-hydroxy-3-methylbut-2-enyl diphosphate + oxidized [flavodoxin] + H2O + 2 H(+) = 2-C-methyl-D-erythritol 2,4-cyclic diphosphate + reduced [flavodoxin]. It participates in isoprenoid biosynthesis; isopentenyl diphosphate biosynthesis via DXP pathway; isopentenyl diphosphate from 1-deoxy-D-xylulose 5-phosphate: step 5/6. Converts 2C-methyl-D-erythritol 2,4-cyclodiphosphate (ME-2,4cPP) into 1-hydroxy-2-methyl-2-(E)-butenyl 4-diphosphate. This is 4-hydroxy-3-methylbut-2-en-1-yl diphosphate synthase (flavodoxin) from Azotobacter vinelandii (strain DJ / ATCC BAA-1303).